A 239-amino-acid polypeptide reads, in one-letter code: Norbelladine 4'-O-methyltransferase 3 (239 aa).

Residues Val55, Glu77, 79–80, Ser85, Asp103, and Ala132 each bind S-adenosyl-L-methionine; that span reads GV. Residue Asp155 coordinates a divalent metal cation. Asp157 contacts S-adenosyl-L-methionine. A divalent metal cation is bound by residues Asp181 and Asn182.

The protein belongs to the class I-like SAM-binding methyltransferase superfamily. Cation-dependent O-methyltransferase family. Mg(2+) serves as cofactor.

It catalyses the reaction norbelladine + S-adenosyl-L-methionine = 4'-O-methylnorbelladine + S-adenosyl-L-homocysteine + H(+). It functions in the pathway alkaloid biosynthesis. Functionally, 4'-O-methyltransferase converting norbelladine to 4'-O-methylnorbelladine. 4'-O-methylnorbelladine is a precursor to all Amaryllidaceae alkaloids such as galanthamine, lycorine and haemanthamine, and including haemanthamine- and crinamine-type alkaloids, promising anticancer agents. This Narcissus aff. pseudonarcissus MK-2014 (Daffodil) protein is Norbelladine 4'-O-methyltransferase 3.